Here is a 537-residue protein sequence, read N- to C-terminus: Tyrosine-protein phosphatase CDC14 homolog (537 aa).

The Tyrosine-protein phosphatase domain occupies 182 to 345 (DFNWISPKFI…QVHFRAYFYE (164 aa)). Residue Cys-286 is the Phosphocysteine intermediate of the active site. A disordered region spans residues 359–537 (EPLATPPRHP…PKPSKSRLIS (179 aa)). Polar residues predominate over residues 370–382 (NATNGTSQSNIST). Residues 400-411 (PPSARRLPSASS) are compositionally biased toward low complexity. Over residues 421–437 (ASKQSIQNENKASYSSY) the composition is skewed to polar residues. At Thr-453 the chain carries Phosphothreonine. Phosphoserine is present on residues Ser-468 and Ser-470. A compositionally biased stretch (low complexity) spans 490 to 502 (RRTSGNRWSSGSS). A Phosphoserine modification is found at Ser-513. Residues 514–523 (MSSLNNTSNG) are compositionally biased toward polar residues. The span at 526-537 (AKPKPSKSRLIS) shows a compositional bias: basic residues.

This sequence belongs to the protein-tyrosine phosphatase family. Non-receptor class CDC14 subfamily. As to quaternary structure, interacts with ark1 at the kinetochores. Interacts with bir1, cdc25, mid1, nbl1, pic1, and rad24. Phosphorylated by cds1, chk1, pmk1, and cdc2 upon Hydroxylurea and H(2)O(2) stress treatment. Phosphorylation regulates the nucleolar-to-nucleoplasmic transition. Is able to autodephosphorylate.

It localises to the nucleus. The protein localises to the nucleolus. It is found in the cytoplasm. The protein resides in the cytoskeleton. Its subcellular location is the microtubule organizing center. It localises to the spindle pole body. The enzyme catalyses O-phospho-L-tyrosyl-[protein] + H2O = L-tyrosyl-[protein] + phosphate. Its function is as follows. Protein phosphatase which antagonizes mitotic cyclin-dependent kinase cdc2, the inactivation of which is essential for exit from mitosis. To access its substrates, is released from nucleolar sequestration during mitosis. Plays an essential in coordinating the nuclear division cycle with cytokinesis through the cytokinesis checkpoint. Involved in chromosome segregation, where it is required for meiosis I spindle dissambly as well as for establishing two consecutive chromosome segregation phases. Allows damaged actomyosin rings to be maintained to facilitate completion of cell division in response to minor perturbation of the cell division machinery. Dephosphorylates the mitotic inducer cdc25 for its rapid degradation. Down-regulation of cdc25 activity ensures a prompt inactivation of mitotic cdc2 complexes to trigger cell division. Also dephosphorylates cdc2-phosphorylated nsk1, allowing nsk1-binding to kinetochores and spindle. Dephosphorylates ase1, which is essential for spindle midzone assembly and for continuous extension of the anaphase spindle. Tethered to the contractile ring by mid1, where it dephosphorylates cdc15. This chain is Tyrosine-protein phosphatase CDC14 homolog (clp1), found in Schizosaccharomyces pombe (strain 972 / ATCC 24843) (Fission yeast).